The following is a 259-amino-acid chain: Deoxyribose-phosphate aldolase (259 aa).

Catalysis depends on Asp102, which acts as the Proton donor/acceptor. The Schiff-base intermediate with acetaldehyde role is filled by Lys167. The active-site Proton donor/acceptor is the Lys201.

This sequence belongs to the DeoC/FbaB aldolase family. DeoC type 2 subfamily.

Its subcellular location is the cytoplasm. It carries out the reaction 2-deoxy-D-ribose 5-phosphate = D-glyceraldehyde 3-phosphate + acetaldehyde. It participates in carbohydrate degradation; 2-deoxy-D-ribose 1-phosphate degradation; D-glyceraldehyde 3-phosphate and acetaldehyde from 2-deoxy-alpha-D-ribose 1-phosphate: step 2/2. Its function is as follows. Catalyzes a reversible aldol reaction between acetaldehyde and D-glyceraldehyde 3-phosphate to generate 2-deoxy-D-ribose 5-phosphate. The protein is Deoxyribose-phosphate aldolase of Escherichia coli O45:K1 (strain S88 / ExPEC).